We begin with the raw amino-acid sequence, 89 residues long: Protein S100-A8 (89 aa).

2 EF-hand domains span residues 13–48 (IDVY…FVQN) and 46–81 (VQNI…VGVA). H17 and H27 together coordinate Zn(2+). Position 33 (D33) interacts with Ca(2+). An S-nitrosocysteine modification is found at C42. Residues D59, N61, D63, and E70 each coordinate Ca(2+). H83 is a binding site for Zn(2+).

The protein belongs to the S-100 family. In terms of assembly, homodimer. Preferentially exists as a heterodimer or heterotetramer with S100A9 known as calprotectin (S100A8/A9). Calprotectin (S100A8/9) interacts with CEACAM3 and tubulin filaments in a calcium-dependent manner. Heterotetrameric calprotectin (S100A8/A9) interacts with ANXA6 and associates with tubulin filaments in activated monocytes. S100A8 and calprotectin (S100A8/9) interact with NCF2/P67PHOX, RAC1 and RAC2. Calprotectin (S100A8/9) interacts with CYBA and CYBB. S100A8 interacts with AGER, ATP2A2 and with the heterodimeric complex formed by TLR4 and LY96. Calprotectin (S100A8/9) interacts with NOS2 to form the iNOS-S100A8/A9 transnitrosylase complex. Calprotectin (S100A8/9) interacts with CD69.

The protein localises to the secreted. Its subcellular location is the cytoplasm. The protein resides in the cytoskeleton. It is found in the cell membrane. With respect to regulation, calprotectin (S100A8/A9) activity on TLR4 signaling is inhibited by paquinimod. In terms of biological role, S100A8 is a calcium- and zinc-binding protein which plays a prominent role in the regulation of inflammatory processes and immune response. It can induce neutrophil chemotaxis and adhesion. Predominantly found as calprotectin (S100A8/A9) which has a wide plethora of intra- and extracellular functions. The intracellular functions include: facilitating leukocyte arachidonic acid trafficking and metabolism, modulation of the tubulin-dependent cytoskeleton during migration of phagocytes and activation of the neutrophilic NADPH-oxidase. Also participates in regulatory T-cell differentiation together with CD69. Activates NADPH-oxidase by facilitating the enzyme complex assembly at the cell membrane, transferring arachidonic acid, an essential cofactor, to the enzyme complex and S100A8 contributes to the enzyme assembly by directly binding to NCF2/P67PHOX. The extracellular functions involve pro-inflammatory, antimicrobial, oxidant-scavenging and apoptosis-inducing activities. Its pro-inflammatory activity includes recruitment of leukocytes, promotion of cytokine and chemokine production, and regulation of leukocyte adhesion and migration. Acts as an alarmin or a danger associated molecular pattern (DAMP) molecule and stimulates innate immune cells via binding to pattern recognition receptors such as Toll-like receptor 4 (TLR4) and receptor for advanced glycation endproducts (AGER). Binding to TLR4 and AGER activates the MAP-kinase and NF-kappa-B signaling pathways resulting in the amplification of the pro-inflammatory cascade. Has antimicrobial activity towards bacteria and fungi and exerts its antimicrobial activity probably via chelation of Zn(2+) which is essential for microbial growth. Can induce cell death via autophagy and apoptosis and this occurs through the cross-talk of mitochondria and lysosomes via reactive oxygen species (ROS) and the process involves BNIP3. Can regulate neutrophil number and apoptosis by an anti-apoptotic effect; regulates cell survival via ITGAM/ITGB and TLR4 and a signaling mechanism involving MEK-ERK. Its role as an oxidant scavenger has a protective role in preventing exaggerated tissue damage by scavenging oxidants. The iNOS-S100A8/A9 transnitrosylase complex is proposed to direct selective inflammatory stimulus-dependent S-nitrosylation of multiple targets such as GAPDH, ANXA5, EZR, MSN and VIM by recognizing a [IL]-x-C-x-x-[DE] motif; S100A8 seems to contribute to S-nitrosylation site selectivity. (Microbial infection) Upon infection by murine coronavirus (MHV-A59), induces expansion of aberrant immature neutrophils in a TLR4-dependent manner. The polypeptide is Protein S100-A8 (Mus musculus (Mouse)).